The primary structure comprises 231 residues: Small ribosomal subunit protein uS3 (231 aa).

Positions 39-107 (IRKFIMKTLP…GVSLNIVEIR (69 aa)) constitute a KH type-2 domain.

This sequence belongs to the universal ribosomal protein uS3 family. As to quaternary structure, part of the 30S ribosomal subunit. Forms a tight complex with proteins S10 and S14.

Its function is as follows. Binds the lower part of the 30S subunit head. Binds mRNA in the 70S ribosome, positioning it for translation. The sequence is that of Small ribosomal subunit protein uS3 from Zymomonas mobilis subsp. mobilis (strain ATCC 31821 / ZM4 / CP4).